The following is a 367-amino-acid chain: tRNA-specific 2-thiouridylase MnmA (367 aa).

Residues 13-20 and M39 each bind ATP; that span reads GLSGGVDS. The segment at 99-101 is interaction with target base in tRNA; that stretch reads NPD. The active-site Nucleophile is the C104. The cysteines at positions 104 and 200 are disulfide-linked. G128 is a binding site for ATP. Residues 150 to 152 form an interaction with tRNA region; the sequence is KDQ. C200 serves as the catalytic Cysteine persulfide intermediate. Residues 307–308 form an interaction with tRNA region; that stretch reads RY.

It belongs to the MnmA/TRMU family.

The protein localises to the cytoplasm. The enzyme catalyses S-sulfanyl-L-cysteinyl-[protein] + uridine(34) in tRNA + AH2 + ATP = 2-thiouridine(34) in tRNA + L-cysteinyl-[protein] + A + AMP + diphosphate + H(+). Functionally, catalyzes the 2-thiolation of uridine at the wobble position (U34) of tRNA, leading to the formation of s(2)U34. The chain is tRNA-specific 2-thiouridylase MnmA from Neisseria meningitidis serogroup C (strain 053442).